Here is a 605-residue protein sequence, read N- to C-terminus: Ankyrin repeat domain-containing protein 13D (605 aa).

ANK repeat units follow at residues 39 to 68 and 72 to 101; these read RGRT…NVGK and QGWA…YQRA. The disordered stretch occupies residues 306–333; it reads AQQHSSHTGAPVQQAASPTNPTAISPEE. Residues 319–328 are compositionally biased toward polar residues; it reads QAASPTNPTA. 2 UIM domains span residues 482–501 and 528–547; these read EDDD…AGTE and EEQL…STEP. A disordered region spans residues 541–605; sequence LQLSTEPRGP…RILQLSLTEH (65 aa). Residues 550-563 show a composition bias toward pro residues; it reads PGSPPRTPPAPGPP. A Phosphoserine modification is found at S552. Residue T556 is modified to Phosphothreonine. A compositionally biased stretch (low complexity) spans 564–575; sequence SFEEQLRLALEL. UIM domains lie at 564–583 and 589–605; these read SFEE…QEER and QEEE…LTEH. A compositionally biased stretch (basic and acidic residues) spans 576–589; it reads SSREQEERERRGQQ.

As to quaternary structure, interacts with EGFR (ubiquitinated); the interaction is direct and may regulate EGFR internalization.

The protein resides in the cell membrane. Its subcellular location is the late endosome. Its function is as follows. Ubiquitin-binding protein that specifically recognizes and binds 'Lys-63'-linked ubiquitin. Does not bind 'Lys-48'-linked ubiquitin. Positively regulates the internalization of ligand-activated EGFR by binding to the Ub moiety of ubiquitinated EGFR at the cell membrane. The polypeptide is Ankyrin repeat domain-containing protein 13D (ANKRD13D) (Homo sapiens (Human)).